A 180-amino-acid chain; its full sequence is NADH-quinone oxidoreductase subunit I (180 aa).

2 consecutive 4Fe-4S ferredoxin-type domains span residues 50-80 (LTRD…LQKA) and 90-119 (EFFR…LTPD). [4Fe-4S] cluster is bound by residues Cys-60, Cys-63, Cys-66, Cys-70, Cys-99, Cys-102, Cys-105, and Cys-109.

Belongs to the complex I 23 kDa subunit family. In terms of assembly, NDH-1 is composed of 14 different subunits. Subunits NuoA, H, J, K, L, M, N constitute the membrane sector of the complex. [4Fe-4S] cluster is required as a cofactor.

It is found in the cell inner membrane. The enzyme catalyses a quinone + NADH + 5 H(+)(in) = a quinol + NAD(+) + 4 H(+)(out). Its function is as follows. NDH-1 shuttles electrons from NADH, via FMN and iron-sulfur (Fe-S) centers, to quinones in the respiratory chain. The immediate electron acceptor for the enzyme in this species is believed to be ubiquinone. Couples the redox reaction to proton translocation (for every two electrons transferred, four hydrogen ions are translocated across the cytoplasmic membrane), and thus conserves the redox energy in a proton gradient. This chain is NADH-quinone oxidoreductase subunit I, found in Acinetobacter baumannii (strain ACICU).